Reading from the N-terminus, the 541-residue chain is MPILSLSSTRNSVLTRIYDYLKALVQQVIVPNVEDDKSSKSTPFEKLEPAKQNHPQKDCCATEKDDLVDVSELFPKQNNKQLSLTSKSSVVPCALNLDNLETPFSIKIDNNGAVTTQLNLDEPILRGPSRGEPAKLQNDLISSPPLEESYINNDQYKALFPSNFLPITPVSSVITPASKKSIDESPLSDEVQGIADESSETLPYICHYCDARFRIRGYLTRHIKKHAKRKAYHCPFFDNSISQELRCHTSGGFSRRDTYKTHLKSRHFTYPEGVKPQDRNKSPGVCTQCGEHFSTSESWVENHIEAGSCKGLPEGYSEGIREKKKTSKMKMIKTSDGQTRFISSDESVSEPALQNKNCIEATVMQSKERPNDKIIPTKTEKNDFGIGTQWFERKQISRPTQTTQSRGPTEVQNLKEWSIISPPILSPQNASSVPQEYQSSRYTLHMDSPALSSASSALSPLSGDPITTTETNKSYPLDSEQSLLEPDKTEEDAINQSKESNMISINEMLQKQMDFELLGENHLKETQDYLALYKKAYGIEF.

Residues 13 to 32 are i; sequence VLTRIYDYLKALVQQVIVPN. Residues 35 to 58 form a disordered region; sequence DDKSSKSTPFEKLEPAKQNHPQKD. Positions 73-105 are II; sequence LFPKQNNKQLSLTSKSSVVPCALNLDNLETPFS. The segment at 204–226 adopts a C2H2-type 1 zinc-finger fold; that stretch reads YICHYCDARFRIRGYLTRHIKKH. The C2H2-type 2; atypical zinc finger occupies 232-267; sequence YHCPFFDNSISQELRCHTSGGFSRRDTYKTHLKSRH. The C2H2-type 3; atypical zinc finger occupies 284-309; sequence GVCTQCGEHFSTSESWVENHIEAGSC. A compositionally biased stretch (low complexity) spans 452–462; that stretch reads SSASSALSPLS. The interval 452–497 is disordered; the sequence is SSASSALSPLSGDPITTTETNKSYPLDSEQSLLEPDKTEEDAINQS. Positions 465–482 are enriched in polar residues; the sequence is PITTTETNKSYPLDSEQS.

Interacts (via Region II) with SSY5; protease component of the SPS-sensor. Activated by the amino acid-induced proteolytic removal of an N-terminal inhibitory domain by serine protease SSY5, an intrinsic component of the SPS-sensor. Processing requires at least 2 components of the SCF(GRR1) ubiquitin ligase complex, namely the F-box protein GRR1 and the E2 enzyme CDC34, but does not depend on the proteasome. Processing is negatively regulated by the protein phosphatase 2A regulatory subunit RTS1.

The protein localises to the cell membrane. The protein resides in the nucleus. In terms of biological role, transcription factor involved in the regulation of gene expression in response to extracellular amino acid levels. Synthesized as latent cytoplasmic precursor, which, upon a signal initiated by the plasma membrane SPS (SSY1-PTR3-SSY5) amino acid sensor system, becomes proteolytically activated and relocates to the nucleus, where it induces the expression of SPS-sensor-regulated genes, including the amino-acid permeases BAP2 and BAP3. Binding to promoters is facilitated by DAL81. Involved in the repression of genes subject to nitrogen catabolite repression and genes involved in stress response. Negatively regulated by inner nuclear membrane proteins ASI1, ASI2 and ASI3, which prevent unprocessed precursor forms that escape cytoplasmic anchoring from inducing SPS-sensor-regulated genes. The polypeptide is Transcription factor STP2 (STP2) (Saccharomyces cerevisiae (strain ATCC 204508 / S288c) (Baker's yeast)).